A 284-amino-acid polypeptide reads, in one-letter code: RNase adapter protein RapZ (284 aa).

Position 8–15 (8–15 (GRSGSGKS)) interacts with ATP. 56 to 59 (DVRN) is a GTP binding site. The RNA-binding stretch occupies residues 266-284 (RSRGKNVQSRHRTLEKRKS).

It belongs to the RapZ-like family. RapZ subfamily. As to quaternary structure, homotrimer.

Functionally, modulates the synthesis of GlmS, by affecting the processing and stability of the regulatory small RNA GlmZ. When glucosamine-6-phosphate (GlcN6P) concentrations are high in the cell, RapZ binds GlmZ and targets it to cleavage by RNase E. Consequently, GlmZ is inactivated and unable to activate GlmS synthesis. Under low GlcN6P concentrations, RapZ is sequestered and inactivated by an other regulatory small RNA, GlmY, preventing GlmZ degradation and leading to synthesis of GlmS. This Cronobacter sakazakii (strain ATCC BAA-894) (Enterobacter sakazakii) protein is RNase adapter protein RapZ.